The following is a 128-amino-acid chain: Sulfurtransferase TusD (128 aa).

Catalysis depends on C78, which acts as the Cysteine persulfide intermediate.

Belongs to the DsrE/TusD family. As to quaternary structure, heterohexamer, formed by a dimer of trimers. The hexameric TusBCD complex contains 2 copies each of TusB, TusC and TusD. The TusBCD complex interacts with TusE.

The protein localises to the cytoplasm. Part of a sulfur-relay system required for 2-thiolation of 5-methylaminomethyl-2-thiouridine (mnm(5)s(2)U) at tRNA wobble positions. Accepts sulfur from TusA and transfers it in turn to TusE. The polypeptide is Sulfurtransferase TusD (Klebsiella pneumoniae (strain 342)).